The chain runs to 249 residues: MAADLLDVHGLLFKRQQYKEADLLAKLWTKELGIVTVIAKGGMRPKSQLAAAVLPFTEGTFGILTRYKGISQLRTYKKLSQHDELFTDLDKNAYLSYLFDLADHAFSEYQKLGGYYDLLLVAFNRIVAGQDPEIIAQIVQLQLLDAFGVAPQLGACVICGKEKGIFDYSIAAGGVVCSDHFRSVSRLHLSPKATALIRTLALLPISRLGEIQIGEDLKKESRRAIAQIYQATVDLHLPSLRFLNEVRGS.

Belongs to the RecO family.

Involved in DNA repair and RecF pathway recombination. In Lactobacillus delbrueckii subsp. bulgaricus (strain ATCC 11842 / DSM 20081 / BCRC 10696 / JCM 1002 / NBRC 13953 / NCIMB 11778 / NCTC 12712 / WDCM 00102 / Lb 14), this protein is DNA repair protein RecO.